Reading from the N-terminus, the 961-residue chain is Vinculin (961 aa).

2 repeat units span residues Glu258–Leu362 and Leu371–Ala470. Residues Glu258–Ala470 are 2 X repeats. The interval Ala720–Asp778 is disordered. Residues Pro723–Pro738 are compositionally biased toward pro residues. A Phosphothreonine modification is found at Thr774.

This sequence belongs to the vinculin/alpha-catenin family. Exhibits self-association properties.

The protein localises to the cytoplasm. It is found in the cytoskeleton. The protein resides in the cell junction. Its subcellular location is the adherens junction. It localises to the cell membrane. Involved in cell adhesion. May be involved in the attachment of the actin-based microfilaments to the plasma membrane. This is Vinculin (Vinc) from Drosophila melanogaster (Fruit fly).